Reading from the N-terminus, the 458-residue chain is Cobyrinate a,c-diamide synthase (458 aa).

Residues 254–445 (KIGVIRDQVF…IHVHFLSDKS (192 aa)) form the GATase cobBQ-type domain. Cysteine 335 functions as the Nucleophile in the catalytic mechanism.

This sequence belongs to the CobB/CbiA family. Mg(2+) serves as cofactor.

The enzyme catalyses cob(II)yrinate + 2 L-glutamine + 2 ATP + 2 H2O = cob(II)yrinate a,c diamide + 2 L-glutamate + 2 ADP + 2 phosphate + 2 H(+). It participates in cofactor biosynthesis; adenosylcobalamin biosynthesis; cob(II)yrinate a,c-diamide from sirohydrochlorin (anaerobic route): step 10/10. Catalyzes the ATP-dependent amidation of the two carboxylate groups at positions a and c of cobyrinate, using either L-glutamine or ammonia as the nitrogen source. The protein is Cobyrinate a,c-diamide synthase of Archaeoglobus fulgidus (strain ATCC 49558 / DSM 4304 / JCM 9628 / NBRC 100126 / VC-16).